Reading from the N-terminus, the 459-residue chain is tRNA modification GTPase MnmE (459 aa).

(6S)-5-formyl-5,6,7,8-tetrahydrofolate-binding residues include R21, E84, and R123. In terms of domain architecture, TrmE-type G spans 219–378 (GVTVALAGAV…LLVLLYNFVL (160 aa)). Residues 229–234 (NAGKSS), 248–254 (TEHPGTT), and 273–276 (DTAG) contribute to the GTP site. 2 residues coordinate Mg(2+): S233 and T254. K459 lines the (6S)-5-formyl-5,6,7,8-tetrahydrofolate pocket.

Belongs to the TRAFAC class TrmE-Era-EngA-EngB-Septin-like GTPase superfamily. TrmE GTPase family. As to quaternary structure, homodimer. Heterotetramer of two MnmE and two MnmG subunits. The cofactor is K(+).

It localises to the cytoplasm. Its function is as follows. Exhibits a very high intrinsic GTPase hydrolysis rate. Involved in the addition of a carboxymethylaminomethyl (cmnm) group at the wobble position (U34) of certain tRNAs, forming tRNA-cmnm(5)s(2)U34. The sequence is that of tRNA modification GTPase MnmE from Lawsonia intracellularis (strain PHE/MN1-00).